A 140-amino-acid polypeptide reads, in one-letter code: Cystatin-C (140 aa).

The signal sequence occupies residues 1-20 (MASPLRSLMLLLAVLAVAWA). The Secondary area of contact signature appears at 75–79 (QLVAG). Cystine bridges form between C93–C103 and C117–C137. A glycan (N-linked (GlcNAc...) asparagine) is linked at N99.

The protein belongs to the cystatin family.

Its subcellular location is the secreted. Its function is as follows. As an inhibitor of cysteine proteinases, this protein is thought to serve an important physiological role as a local regulator of this enzyme activity. Known to inhibit cathepsin B, H, and L. The polypeptide is Cystatin-C (Cst3) (Rattus norvegicus (Rat)).